Consider the following 393-residue polypeptide: ATP phosphoribosyltransferase regulatory subunit (393 aa).

The protein belongs to the class-II aminoacyl-tRNA synthetase family. HisZ subfamily. In terms of assembly, heteromultimer composed of HisG and HisZ subunits.

It is found in the cytoplasm. It functions in the pathway amino-acid biosynthesis; L-histidine biosynthesis; L-histidine from 5-phospho-alpha-D-ribose 1-diphosphate: step 1/9. In terms of biological role, required for the first step of histidine biosynthesis. May allow the feedback regulation of ATP phosphoribosyltransferase activity by histidine. The protein is ATP phosphoribosyltransferase regulatory subunit of Marinobacter nauticus (strain ATCC 700491 / DSM 11845 / VT8) (Marinobacter aquaeolei).